The primary structure comprises 743 residues: DEAD-box ATP-dependent RNA helicase 3B, chloroplastic (743 aa).

The transit peptide at 1 to 37 (MASLTLPALALALSNPGAVRLRAAAFRCWALRRRGWA) directs the protein to the chloroplast. Positions 60–79 (GSDDEDGEGPYGSDADEGFE) are disordered. Acidic residues predominate over residues 61–79 (SDDEDGEGPYGSDADEGFE). The Q motif signature appears at 88 to 116 (LAIARLGLPDELVATLEKRGITHLFPIQR). Residues 119 to 295 (LIPALEGRDL…RRYLNNPLTI (177 aa)) enclose the Helicase ATP-binding domain. 132–139 (AKTGTGKT) serves as a coordination point for ATP. The DEAD box motif lies at 243-246 (DEAD). Residues 324-469 (VLSDLITVYA…ISPPSIEEVL (146 aa)) enclose the Helicase C-terminal domain. The interval 606-719 (LTKISKLPAL…RSSSFGGRES (114 aa)) is disordered. The span at 642–653 (GGGASRGRGGWD) shows a compositional bias: gly residues. The span at 657–671 (EDRFRRGGRSLRSDN) shows a compositional bias: basic and acidic residues. Residues 688 to 719 (RSSSFGSRSSSYSSRGSPSFGGRSSSFGGRES) show a composition bias toward low complexity. The CCHC-type zinc finger occupies 725-742 (GACFNCGESGHRATDCPN).

The protein belongs to the DEAD box helicase family. DDX21/DDX50 subfamily.

It is found in the plastid. The protein localises to the chloroplast stroma. The enzyme catalyses ATP + H2O = ADP + phosphate + H(+). In terms of biological role, nuclear genome-encoded factor involved in ribosome biogenesis in chloroplasts. Binds specific group II introns in chloroplasts and facilitates their splicing. Is required for rRNA maturation in plastids and may contribute to the assembly of the large (50S) ribosomal subunit. Required for normal development of chloroplasts. This Zea mays (Maize) protein is DEAD-box ATP-dependent RNA helicase 3B, chloroplastic.